Reading from the N-terminus, the 341-residue chain is S-adenosylmethionine:tRNA ribosyltransferase-isomerase (341 aa).

Belongs to the QueA family. In terms of assembly, monomer.

Its subcellular location is the cytoplasm. It carries out the reaction 7-aminomethyl-7-carbaguanosine(34) in tRNA + S-adenosyl-L-methionine = epoxyqueuosine(34) in tRNA + adenine + L-methionine + 2 H(+). Its pathway is tRNA modification; tRNA-queuosine biosynthesis. In terms of biological role, transfers and isomerizes the ribose moiety from AdoMet to the 7-aminomethyl group of 7-deazaguanine (preQ1-tRNA) to give epoxyqueuosine (oQ-tRNA). In Clostridium perfringens (strain ATCC 13124 / DSM 756 / JCM 1290 / NCIMB 6125 / NCTC 8237 / Type A), this protein is S-adenosylmethionine:tRNA ribosyltransferase-isomerase.